The following is a 593-amino-acid chain: Protein GAMETE EXPRESSED 1 (593 aa).

Residues 1-24 (MDRFSRKCLLFLLLIILLDSPLTC) form the signal peptide. Residues 25-427 (HSWGWFSSSS…LHNAMLLESR (403 aa)) are Extracellular-facing. Coiled-coil stretches lie at residues 156 to 194 (CQQL…SKSD) and 350 to 387 (EALQ…HDHL). Residues 428-448 (VIKAFVIYFLSIFVIYMFTST) traverse the membrane as a helical segment. The Cytoplasmic segment spans residues 449–457 (KQTYIIRPR). A helical membrane pass occupies residues 458–476 (LYIGLCVTLALEVASLRYV). Residues 477-485 (NDTERQAWM) are Extracellular-facing. Residues 486–506 (INLIRSLFALLASAQLLHAAL) form a helical membrane-spanning segment. Residues 507–593 (SYRDYEVLNH…TRRLYNFRPR (87 aa)) are Cytoplasmic-facing.

Homodimer. In terms of tissue distribution, in tricellular pollen, expressed in mature sperm cells. Not expressed in bicellular or unicellular pollen. Detected in ovules, roots and guard cells. Expressed in the embryo sac before cellularization, in the egg cell after cellularization, in the zygote/embryo immediately after fertilization and in the pollen vegetative cell.

The protein localises to the cell membrane. Has a dual function during gametophyte development and early embryogenesis. Required for correct pollen maturation. This chain is Protein GAMETE EXPRESSED 1 (GEX1), found in Arabidopsis thaliana (Mouse-ear cress).